The following is a 151-amino-acid chain: Transcriptional regulator SyrB (151 aa).

The interval 1–61 is disordered; that stretch reads MADESNTGPV…RYSEQERNDK (61 aa). A compositionally biased stretch (low complexity) spans 33–48; the sequence is PQKAAAEPAQPKAPAA. Residues 52–61 are compositionally biased toward basic and acidic residues; it reads RYSEQERNDK.

The protein belongs to the SyrB family.

Functionally, responsible for the repression of SyrM activity. The chain is Transcriptional regulator SyrB (syrB) from Rhizobium meliloti (strain 1021) (Ensifer meliloti).